An 868-amino-acid polypeptide reads, in one-letter code: DNA replication licensing factor MCM2 (868 aa).

Disordered regions lie at residues 1-65 and 87-106; these read MSDN…DEVE and NRDR…ELSL. Phosphoserine occurs at positions 14, 16, and 23. Positions 49 to 65 are enriched in acidic residues; sequence EGDDNEVDDVPDIDEVE. A phosphoserine mark is found at Ser-164 and Ser-170. The segment at 341–367 adopts a C4-type zinc-finger fold; sequence CLKCGSILGPFFQDSNEEIRISFCTNC. An MCM domain is found at 493–700; it reads IIDKIISSMA…ADERLATFVV (208 aa). An ATP-binding site is contributed by 543–550; it reads GDPGTAKS. An Arginine finger motif is present at residues 675–678; sequence SRFD. The interval 704-728 is disordered; sequence VRSHPENDEDREGEELKNNGESAIE.

Belongs to the MCM family. In terms of assembly, component of the MCM2-7 complex. The complex forms a toroidal hexameric ring with the proposed subunit order MCM2-MCM6-MCM4-MCM7-MCM3-MCM5; loaded onto DNA, forms a head-head double hexamer.

It is found in the nucleus. The catalysed reaction is ATP + H2O = ADP + phosphate + H(+). Its function is as follows. Acts as a component of the MCM2-7 complex (MCM complex) which is the putative replicative helicase essential for 'once per cell cycle' DNA replication initiation and elongation in eukaryotic cells. The active ATPase sites in the MCM2-7 ring are formed through the interaction surfaces of two neighboring subunits such that a critical structure of a conserved arginine finger motif is provided in trans relative to the ATP-binding site of the Walker A box of the adjacent subunit. The six ATPase active sites, however, are likely to contribute differentially to the complex helicase activity; specifically the MCM2-MCM5 association is proposed to be reversible and to mediate a open ring conformation which may facilitate DNA loading. Once loaded onto DNA, double hexamers can slide on dsDNA in the absence of ATPase activity. Necessary for cell growth. This chain is DNA replication licensing factor MCM2 (MCM2), found in Saccharomyces cerevisiae (strain ATCC 204508 / S288c) (Baker's yeast).